We begin with the raw amino-acid sequence, 107 residues long: RecQ-mediated genome instability protein 2 homolog (107 aa).

The protein belongs to the RMI2 family. In terms of assembly, component of the RMI complex, containing at least top-3, rmh-1 and rmh-2. Component of the BTR double Holliday Junction dissolution complex composed of at least him-6, top-3, rmh-1 and rmif-2, which is involved in double strand break repair in the germline. Interacts with rmh-1; the interaction is direct and is required for mutual stability and localization at nuclear foci. Expressed in the germline.

It is found in the nucleus. Its function is as follows. Essential component of the RMI complex, a complex that plays an important role in the processing of homologous recombination intermediates. Component of the BTR double Holliday Junction dissolution complex, which is involved in homologous recombination during meiotic double strand break in the germline. Plays a role in double strand break repair by positively regulating the accumulation of rad-51 at double strand breaks. Stabilizes and positively regulates the localization of the BTR double Holliday Junction dissolution complex components rmh-1, him-6 and top-3 at nuclear foci during meiotic recombination. Positively regulates meiotic recombination, chiasma formation, and chromosome segregation in meiosis. Positively regulates DNA crossover formation and positioning on chromosome arms (away from the chromosome center) during homologous recombination. In Caenorhabditis elegans, this protein is RecQ-mediated genome instability protein 2 homolog.